Consider the following 189-residue polypeptide: Molybdopterin synthase catalytic subunit (189 aa).

The residue at position 20 (Ser-20) is a Phosphoserine. Residues 143 to 144, Lys-159, and 166 to 168 each bind substrate; these read HR and KKE.

This sequence belongs to the MoaE family. MOCS2B subfamily. As to quaternary structure, heterotetramer; composed of 2 small (MOCS2A) and 2 large (MOCS2B) subunits.

Its subcellular location is the cytoplasm. The protein resides in the cytosol. The enzyme catalyses 2 [molybdopterin-synthase sulfur-carrier protein]-C-terminal-Gly-aminoethanethioate + cyclic pyranopterin phosphate + H2O = molybdopterin + 2 [molybdopterin-synthase sulfur-carrier protein]-C-terminal Gly-Gly + 2 H(+). Its pathway is cofactor biosynthesis; molybdopterin biosynthesis. Functionally, catalytic subunit of the molybdopterin synthase complex, a complex that catalyzes the conversion of precursor Z into molybdopterin. Acts by mediating the incorporation of 2 sulfur atoms from thiocarboxylated MOCS2A into precursor Z to generate a dithiolene group. The chain is Molybdopterin synthase catalytic subunit from Bos taurus (Bovine).